Reading from the N-terminus, the 228-residue chain is UPF0758 protein CLB_3028 (228 aa).

Positions 106–228 (KISTPLDVSN…YVSMKEKGTI (123 aa)) constitute an MPN domain. Residues His177, His179, and Asp190 each contribute to the Zn(2+) site. A JAMM motif motif is present at residues 177–190 (HNHPSGDPTPSKED).

This sequence belongs to the UPF0758 family.

The protein is UPF0758 protein CLB_3028 of Clostridium botulinum (strain ATCC 19397 / Type A).